The following is a 4134-amino-acid chain: DNA-dependent protein kinase catalytic subunit (4134 aa).

HEAT repeat units follow at residues 900-937, 1000-1036, and 1050-1085; these read VIYL…VAYM, QDTV…LKWS, and ANTK…YREF. 2 TPR repeats span residues 1265 to 1305 and 1722 to 1755; these read YNTF…HDIH and PMSS…SQSP. A Phosphoserine; by autocatalysis modification is found at S2055. The stretch at 2207–2240 is one TPR 3 repeat; that stretch reads DEILANRLLEFLMKNAFHQKRAVFRHNLEIIKTV. T2609 is modified (phosphothreonine; by autocatalysis). The span at 2611–2629 shows a compositional bias: polar residues; sequence ASQSTNRNSSQERSLSISG. The interval 2611 to 2631 is disordered; that stretch reads ASQSTNRNSSQERSLSISGSV. Phosphoserine; by autocatalysis is present on S2612. Phosphothreonine; by autocatalysis occurs at positions 2638 and 2647. One can recognise an FAT domain in the interval 2880–3545; it reads NVSTSCLASL…IYPFTISSES (666 aa). Positions 3728–4059 constitute a PI3K/PI4K catalytic domain; sequence FDERIMVLES…VSYVKRKLTG (332 aa). The segment at 3734–3740 is G-loop; sequence VLESLRK. The tract at residues 3925 to 3933 is catalytic loop; that stretch reads GIGDRHLSN. Positions 3945 to 3970 are activation loop; sequence GIDFGHAFGSATQFLPVPELMPFRLT. Residues 4102–4134 enclose the FATC domain; that stretch reads DRLSEETQVRCLIDQATDPNLLGRVWEGWEPWM.

This sequence belongs to the PI3/PI4-kinase family. DNA-PK is a heterotrimer of PRKDC and the Ku dimer (composed of XRCC6/Ku70 and XRCC5/Ku86). Component of the core long-range non-homologous end joining (NHEJ) complex (also named DNA-PK complex) composed of PRKDC, LIG4, XRCC4, XRCC6/Ku70, XRCC5/Ku86 and NHEJ1/XLF. Additional component of the NHEJ complex includes PAXX. Following autophosphorylation, PRKDC dissociates from DNA. Autophosphorylated at two clusters, the T2609 cluster and the S2056 cluster. Autophosphorylated on Ser-2055, Thr-2609, Thr-2638 and Thr-2647. Ser-2055 and Thr-2609 are DNA damage-inducible phosphorylation sites (inducible with ionizing radiation, IR) dephosphorylated by PPP5C. Autophosphorylation induces a conformational change that leads to remodeling of the DNA-PK complex, requisite for efficient end processing and DNA repair. Autophosphorylation in trans within DNA-PK complexes loaded on DNA ends leads to the dissociation of PRKDC from DNA and the transition into the short-range NHEJ complex. Autophosphorylation of the T2609 cluster is required for hematopoietic development and protein synthesis in erythrocytes precursors.

Its subcellular location is the nucleus. It is found in the nucleolus. The enzyme catalyses L-seryl-[protein] + ATP = O-phospho-L-seryl-[protein] + ADP + H(+). The catalysed reaction is L-threonyl-[protein] + ATP = O-phospho-L-threonyl-[protein] + ADP + H(+). Functionally, serine/threonine-protein kinase that acts as a molecular sensor for DNA damage. Involved in DNA nonhomologous end joining (NHEJ) required for double-strand break (DSB) repair and V(D)J recombination. Must be bound to DNA to express its catalytic properties. Promotes processing of hairpin DNA structures in V(D)J recombination by activation of the hairpin endonuclease artemis (DCLRE1C). Recruited by XRCC5 and XRCC6 to DNA ends and is required to (1) protect and align broken ends of DNA, thereby preventing their degradation, (2) and sequester the DSB for repair by NHEJ. Acts as a scaffold protein to aid the localization of DNA repair proteins to the site of damage. The assembly of the DNA-PK complex at DNA ends is also required for the NHEJ ligation step. Found at the ends of chromosomes, suggesting a further role in the maintenance of telomeric stability and the prevention of chromosomal end fusion. As part of the DNA-PK complex, involved in the early steps of ribosome assembly by promoting the processing of precursor rRNA into mature 18S rRNA in the small-subunit processome. Recognizes the substrate consensus sequence [ST]-Q. Phosphorylates 'Ser-139' of histone variant H2AX, thereby regulating DNA damage response mechanism. This is DNA-dependent protein kinase catalytic subunit (PRKDC) from Gallus gallus (Chicken).